Reading from the N-terminus, the 442-residue chain is Ribosomal protein uS12 methylthiotransferase RimO (442 aa).

In terms of domain architecture, MTTase N-terminal spans 5-117 (PSIGVVSLGC…VLDAIHAALP (113 aa)). Positions 14, 50, 79, 148, 152, and 155 each coordinate [4Fe-4S] cluster. The Radical SAM core domain occupies 134 to 371 (LTPPHYAYLK…MAVQEAISRQ (238 aa)). The TRAM domain occupies 374-441 (QRRVGQRQRV…AHDLYGMVVS (68 aa)).

It belongs to the methylthiotransferase family. RimO subfamily. [4Fe-4S] cluster is required as a cofactor.

The protein localises to the cytoplasm. The catalysed reaction is L-aspartate(89)-[ribosomal protein uS12]-hydrogen + (sulfur carrier)-SH + AH2 + 2 S-adenosyl-L-methionine = 3-methylsulfanyl-L-aspartate(89)-[ribosomal protein uS12]-hydrogen + (sulfur carrier)-H + 5'-deoxyadenosine + L-methionine + A + S-adenosyl-L-homocysteine + 2 H(+). In terms of biological role, catalyzes the methylthiolation of an aspartic acid residue of ribosomal protein uS12. The sequence is that of Ribosomal protein uS12 methylthiotransferase RimO from Acidithiobacillus ferrooxidans (strain ATCC 53993 / BNL-5-31) (Leptospirillum ferrooxidans (ATCC 53993)).